Consider the following 936-residue polypeptide: E3 ubiquitin-protein ligase ZNRF3 (936 aa).

The segment at 1-31 is disordered; it reads MRPRSGGRPGATGRRRRRLRRRPRGLRCSRL. Positions 1-55 are cleaved as a signal peptide; sequence MRPRSGGRPGATGRRRRRLRRRPRGLRCSRLPPPPPLPLLLGLLLAAAGPGAARA. The segment covering 13–27 has biased composition (basic residues); it reads GRRRRRLRRRPRGLR. The Extracellular segment spans residues 56 to 219; it reads KETAFVEVVL…PRQPTEYFDM (164 aa). The helical transmembrane segment at 220–240 threads the bilayer; it reads GIFLAFFVVVSLVCLILLVKI. Residues 241 to 936 are Cytoplasmic-facing; sequence KLKQRRSQNS…HSADSSSPGA (696 aa). An RING-type; atypical zinc finger spans residues 293-334; the sequence is CAICLEKYIDGEELRVIPCTHRFHRKCVDPWLLQHHTCPHCR. Disordered stretches follow at residues 608–693, 739–758, 849–875, and 892–936; these read SEAG…SPGA, LYEG…SQGL, THSL…ATRE, and CPPE…SPGA. The segment covering 654–684 has biased composition (polar residues); that stretch reads SGDQVSTCSLEMNYSSNSSLEHRGPNSSTSE. Positions 913–922 are enriched in low complexity; sequence ESSTTATEAA.

The protein belongs to the ZNRF3 family. Interacts with LRP6, FZD4, FZD5, FZD6 and FZD8. Interacts with RSPO1; interaction promotes indirect interaction with LGR4 and membrane clearance of ZNRF3. Also interacts with RSPO2. Interacts with LMBR1L.

The protein localises to the cell membrane. The enzyme catalyses S-ubiquitinyl-[E2 ubiquitin-conjugating enzyme]-L-cysteine + [acceptor protein]-L-lysine = [E2 ubiquitin-conjugating enzyme]-L-cysteine + N(6)-ubiquitinyl-[acceptor protein]-L-lysine.. It functions in the pathway protein modification; protein ubiquitination. Its activity is regulated as follows. Negatively regulated by R-spondin proteins such as RSPO1: interaction with RSPO1 induces the indirect association between ZNRF3 and LGR4, promoting membrane clearance of ZNRF3. Functionally, E3 ubiquitin-protein ligase that acts as a negative regulator of the Wnt signaling pathway by mediating the ubiquitination and subsequent degradation of Wnt receptor complex components Frizzled and LRP6. Acts on both canonical and non-canonical Wnt signaling pathway. Acts as a tumor suppressor in the intestinal stem cell zone by inhibiting the Wnt signaling pathway, thereby restricting the size of the intestinal stem cell zone. Along with RSPO2 and RNF43, constitutes a master switch that governs limb specification. This is E3 ubiquitin-protein ligase ZNRF3 (ZNRF3) from Homo sapiens (Human).